Consider the following 385-residue polypeptide: Homoserine O-succinyltransferase (385 aa).

Positions 51 to 359 (NAILICHALS…EATEGHDAFL (309 aa)) constitute an AB hydrolase-1 domain. The Nucleophile role is filled by Ser-157. Position 227 (Arg-227) interacts with substrate. Catalysis depends on residues Asp-322 and His-355. Position 356 (Asp-356) interacts with substrate.

This sequence belongs to the AB hydrolase superfamily. MetX family. As to quaternary structure, homodimer.

It is found in the cytoplasm. The enzyme catalyses L-homoserine + succinyl-CoA = O-succinyl-L-homoserine + CoA. Its pathway is amino-acid biosynthesis; L-methionine biosynthesis via de novo pathway; O-succinyl-L-homoserine from L-homoserine: step 1/1. In terms of biological role, transfers a succinyl group from succinyl-CoA to L-homoserine, forming succinyl-L-homoserine. In Marinomonas sp. (strain MWYL1), this protein is Homoserine O-succinyltransferase.